Consider the following 101-residue polypeptide: Small ribosomal subunit protein uS14 (101 aa).

Belongs to the universal ribosomal protein uS14 family. In terms of assembly, part of the 30S ribosomal subunit. Contacts proteins S3 and S10.

In terms of biological role, binds 16S rRNA, required for the assembly of 30S particles and may also be responsible for determining the conformation of the 16S rRNA at the A site. This is Small ribosomal subunit protein uS14 from Methylibium petroleiphilum (strain ATCC BAA-1232 / LMG 22953 / PM1).